The chain runs to 209 residues: GTP-binding protein RHB1 (209 aa).

Position 1 is an N-acetylmethionine (Met1). Residues Gly28, Lys29, Thr30, Thr31, Val42, Tyr45, Thr48, Asp132, and Ala172 each coordinate GTP. Thr30 contacts Mg(2+). The Effector region signature appears at Tyr45 to Phe53. A Mg(2+)-binding site is contributed by Thr48. Position 206 is a cysteine methyl ester (Cys206). Cys206 is lipidated: S-farnesyl cysteine. Residues Ser207–Met209 constitute a propeptide, removed in mature form.

Belongs to the small GTPase superfamily. Rheb family. In terms of assembly, interacts with BTN2.

The protein resides in the cell membrane. It carries out the reaction GTP + H2O = GDP + phosphate + H(+). Binds GTP and exhibits intrinsic GTPase activity. Involved in the regulation of arginine and lysine uptake. Acts through the CAN1 permease. The protein is GTP-binding protein RHB1 (RHB1) of Saccharomyces cerevisiae (strain ATCC 204508 / S288c) (Baker's yeast).